Here is a 159-residue protein sequence, read N- to C-terminus: 6,7-dimethyl-8-ribityllumazine synthase (159 aa).

Residues phenylalanine 22, alanine 56–glutamate 58, and alanine 80–isoleucine 82 each bind 5-amino-6-(D-ribitylamino)uracil. A (2S)-2-hydroxy-3-oxobutyl phosphate-binding site is contributed by alanine 85–threonine 86. Histidine 88 acts as the Proton donor in catalysis. Residue phenylalanine 113 participates in 5-amino-6-(D-ribitylamino)uracil binding. A (2S)-2-hydroxy-3-oxobutyl phosphate-binding site is contributed by arginine 127.

The protein belongs to the DMRL synthase family.

It catalyses the reaction (2S)-2-hydroxy-3-oxobutyl phosphate + 5-amino-6-(D-ribitylamino)uracil = 6,7-dimethyl-8-(1-D-ribityl)lumazine + phosphate + 2 H2O + H(+). The protein operates within cofactor biosynthesis; riboflavin biosynthesis; riboflavin from 2-hydroxy-3-oxobutyl phosphate and 5-amino-6-(D-ribitylamino)uracil: step 1/2. Functionally, catalyzes the formation of 6,7-dimethyl-8-ribityllumazine by condensation of 5-amino-6-(D-ribitylamino)uracil with 3,4-dihydroxy-2-butanone 4-phosphate. This is the penultimate step in the biosynthesis of riboflavin. This Lactiplantibacillus plantarum (strain ATCC BAA-793 / NCIMB 8826 / WCFS1) (Lactobacillus plantarum) protein is 6,7-dimethyl-8-ribityllumazine synthase.